The sequence spans 319 residues: Phosphoribosylformylglycinamidine cyclo-ligase (319 aa).

This sequence belongs to the AIR synthase family.

Its subcellular location is the cytoplasm. The enzyme catalyses 2-formamido-N(1)-(5-O-phospho-beta-D-ribosyl)acetamidine + ATP = 5-amino-1-(5-phospho-beta-D-ribosyl)imidazole + ADP + phosphate + H(+). The protein operates within purine metabolism; IMP biosynthesis via de novo pathway; 5-amino-1-(5-phospho-D-ribosyl)imidazole from N(2)-formyl-N(1)-(5-phospho-D-ribosyl)glycinamide: step 2/2. The protein is Phosphoribosylformylglycinamidine cyclo-ligase of Sulfurisphaera tokodaii (strain DSM 16993 / JCM 10545 / NBRC 100140 / 7) (Sulfolobus tokodaii).